Reading from the N-terminus, the 424-residue chain is Glutathione reductase (424 aa).

Residue Lys8 coordinates FAD. Residue Tyr56 participates in glutathione binding. Residue Ala72 coordinates FAD. NADP(+) contacts are provided by Ala137, Ile140, Glu143, Arg160, Arg166, and Gly236. Asp277 provides a ligand contact to FAD. Leu283 contributes to the NADP(+) binding site. Thr285 lines the FAD pocket. Arg293 provides a ligand contact to glutathione. Val316 is a binding site for NADP(+). His413 contacts FAD. Residue His413 is the Proton acceptor of the active site.

This sequence belongs to the class-I pyridine nucleotide-disulfide oxidoreductase family. In terms of assembly, homodimer; disulfide-linked. FAD serves as cofactor.

The protein localises to the mitochondrion. It is found in the cytoplasm. It carries out the reaction 2 glutathione + NADP(+) = glutathione disulfide + NADPH + H(+). In terms of biological role, catalyzes the reduction of glutathione disulfide (GSSG) to reduced glutathione (GSH). Constitutes the major mechanism to maintain a high GSH:GSSG ratio in the cytosol. In Rattus norvegicus (Rat), this protein is Glutathione reductase (Gsr).